The following is a 65-amino-acid chain: UPF0370 protein Ent638_2968 (65 aa).

The helical transmembrane segment at 4–24 threads the bilayer; sequence LSKYWWILVLVFLVGVLLNVI. The segment at 39–65 is disordered; sequence KPELPPHRDFNDKWDDDDNWPKKDQKK. The segment covering 42–65 has biased composition (basic and acidic residues); the sequence is LPPHRDFNDKWDDDDNWPKKDQKK.

It belongs to the UPF0370 family.

It localises to the cell membrane. The sequence is that of UPF0370 protein Ent638_2968 from Enterobacter sp. (strain 638).